The chain runs to 232 residues: tRNA pseudouridine synthase B (232 aa).

Asp-53 acts as the Nucleophile in catalysis.

Belongs to the pseudouridine synthase TruB family. Type 1 subfamily.

The enzyme catalyses uridine(55) in tRNA = pseudouridine(55) in tRNA. In terms of biological role, responsible for synthesis of pseudouridine from uracil-55 in the psi GC loop of transfer RNAs. This chain is tRNA pseudouridine synthase B, found in Malacoplasma penetrans (strain HF-2) (Mycoplasma penetrans).